The chain runs to 956 residues: Isoleucine--tRNA ligase (956 aa).

A 'HIGH' region motif is present at residues 60-70; the sequence is PYANGHIHVGH. E583 provides a ligand contact to L-isoleucyl-5'-AMP. The 'KMSKS' region motif lies at 624-628; the sequence is KMSKS. ATP is bound at residue K627. C921, C924, C938, and C941 together coordinate Zn(2+).

Belongs to the class-I aminoacyl-tRNA synthetase family. IleS type 1 subfamily. In terms of assembly, monomer. Zn(2+) serves as cofactor.

The protein localises to the cytoplasm. It carries out the reaction tRNA(Ile) + L-isoleucine + ATP = L-isoleucyl-tRNA(Ile) + AMP + diphosphate. In terms of biological role, catalyzes the attachment of isoleucine to tRNA(Ile). As IleRS can inadvertently accommodate and process structurally similar amino acids such as valine, to avoid such errors it has two additional distinct tRNA(Ile)-dependent editing activities. One activity is designated as 'pretransfer' editing and involves the hydrolysis of activated Val-AMP. The other activity is designated 'posttransfer' editing and involves deacylation of mischarged Val-tRNA(Ile). The protein is Isoleucine--tRNA ligase of Aquifex aeolicus (strain VF5).